The chain runs to 359 residues: Heme A synthase (359 aa).

A run of 6 helical transmembrane segments spans residues 23 to 43 (AVAFWLWSLAVLVFLMVVLGG), 85 to 105 (YAALFPDMDLAGFKFIFFFEW), 109 to 129 (LLGRLIGVATALPLLFFWLRG), 137 to 157 (LKLLGLLALGGLQGFVGWWMV), 172 to 192 (LAIHLILASLTFCFIVWLAAS), and 212 to 232 (AGLILLAILVQIGLGALVAGL). His276 lines the heme pocket. Transmembrane regions (helical) follow at residues 278 to 298 (MVAYLVLGLTLLQVFWTSGTL), 308 to 328 (IALLGLVLAQVILGILTLVLV), and 329 to 349 (VPLWAGLLHQAFAMLVLGMAV). Residue His337 coordinates heme.

Belongs to the COX15/CtaA family. Type 2 subfamily. As to quaternary structure, interacts with CtaB. Heme b serves as cofactor.

The protein resides in the cell membrane. It catalyses the reaction Fe(II)-heme o + 2 A + H2O = Fe(II)-heme a + 2 AH2. The protein operates within porphyrin-containing compound metabolism; heme A biosynthesis; heme A from heme O: step 1/1. Functionally, catalyzes the conversion of heme O to heme A by two successive hydroxylations of the methyl group at C8. The first hydroxylation forms heme I, the second hydroxylation results in an unstable dihydroxymethyl group, which spontaneously dehydrates, resulting in the formyl group of heme A. This is Heme A synthase from Beijerinckia indica subsp. indica (strain ATCC 9039 / DSM 1715 / NCIMB 8712).